We begin with the raw amino-acid sequence, 149 residues long: Cytochrome c-type biogenesis protein CcmE (149 aa).

At 1–7 (MTRKQKR) the chain is on the cytoplasmic side. The helical; Signal-anchor for type II membrane protein transmembrane segment at 8–28 (LAVIAGGVGFIMVAVLLVLFA) threads the bilayer. Residues 29-149 (FGQSIAYFYM…GVWKGEGEAK (121 aa)) are Periplasmic-facing. Heme-binding residues include His123 and Tyr127.

Belongs to the CcmE/CycJ family.

Its subcellular location is the cell inner membrane. Its function is as follows. Heme chaperone required for the biogenesis of c-type cytochromes. Transiently binds heme delivered by CcmC and transfers the heme to apo-cytochromes in a process facilitated by CcmF and CcmH. The sequence is that of Cytochrome c-type biogenesis protein CcmE from Allorhizobium ampelinum (strain ATCC BAA-846 / DSM 112012 / S4) (Agrobacterium vitis (strain S4)).